The chain runs to 62 residues: Pro-MCH variant (62 aa).

The tract at residues 23 to 41 (GSVAFPAENGVQDTESTQE) is NGE-like. The tract at residues 28–62 (PAENGVQDTESTQEKRETGDEENSAQFPIGRRDFD) is disordered. An NEI-like region spans residues 44 to 56 (ETGDEENSAQFPI). Positions 60-62 (DFD) are melanin-concentrating hormone-like.

It belongs to the melanin-concentrating hormone family.

This chain is Pro-MCH variant (PMCHL1), found in Hylobates lar (Lar gibbon).